Here is a 353-residue protein sequence, read N- to C-terminus: Envelope glycoprotein I (353 aa).

Positions 1–20 (MLLWYTTASIMRYLMVFMLF) are cleaved as a signal peptide. Residues 21–274 (GIQCAAAIIY…SADVFMIAVP (254 aa)) are Virion surface-facing. N-linked (GlcNAc...) asparagine; by host glycosylation is found at Asn-40, Asn-75, Asn-84, Asn-122, Asn-138, Asn-227, and Asn-252. A helical transmembrane segment spans residues 275-293 (ITASLLVILAIIIVVTVGI). The Intravirion portion of the chain corresponds to 294-353 (YRRRSSEKRKIYRPKRTKEQASTEKRERSESDVLLEAAVARLETIQEENPPHSVINPFTK). Residues 303–324 (KIYRPKRTKEQASTEKRERSES) are disordered. Residues 310–324 (TKEQASTEKRERSES) are compositionally biased toward basic and acidic residues.

Belongs to the alphaherpesvirinae glycoprotein I family. Interacts with gE.

It localises to the virion membrane. It is found in the host cell membrane. The protein localises to the host cell junction. The protein resides in the host Golgi apparatus membrane. In terms of biological role, in epithelial cells, the heterodimer gE/gI is required for the cell-to-cell spread of the virus, by sorting nascent virions to cell junctions. Once the virus reaches the cell junctions, virus particles can spread to adjacent cells extremely rapidly through interactions with cellular receptors that accumulate at these junctions. Implicated in basolateral spread in polarized cells. In neuronal cells, gE/gI is essential for the anterograde spread of the infection throughout the host nervous system. Together with US9, the heterodimer gE/gI is involved in the sorting and transport of viral structural components toward axon tips. The chain is Envelope glycoprotein I (gI) from Chlorocebus aethiops (Green monkey).